The following is a 185-amino-acid chain: Ribosome-recycling factor (185 aa).

This sequence belongs to the RRF family.

The protein resides in the cytoplasm. Responsible for the release of ribosomes from messenger RNA at the termination of protein biosynthesis. May increase the efficiency of translation by recycling ribosomes from one round of translation to another. The sequence is that of Ribosome-recycling factor from Pseudomonas paraeruginosa (strain DSM 24068 / PA7) (Pseudomonas aeruginosa (strain PA7)).